Here is a 248-residue protein sequence, read N- to C-terminus: UPF0246 protein lp_0089 (248 aa).

It belongs to the UPF0246 family.

In Lactiplantibacillus plantarum (strain ATCC BAA-793 / NCIMB 8826 / WCFS1) (Lactobacillus plantarum), this protein is UPF0246 protein lp_0089.